The sequence spans 417 residues: NADH-quinone oxidoreductase subunit D (417 aa).

This sequence belongs to the complex I 49 kDa subunit family. NDH-1 is composed of 14 different subunits. Subunits NuoB, C, D, E, F, and G constitute the peripheral sector of the complex.

The protein resides in the cell inner membrane. The enzyme catalyses a quinone + NADH + 5 H(+)(in) = a quinol + NAD(+) + 4 H(+)(out). Its function is as follows. NDH-1 shuttles electrons from NADH, via FMN and iron-sulfur (Fe-S) centers, to quinones in the respiratory chain. The immediate electron acceptor for the enzyme in this species is believed to be ubiquinone. Couples the redox reaction to proton translocation (for every two electrons transferred, four hydrogen ions are translocated across the cytoplasmic membrane), and thus conserves the redox energy in a proton gradient. The protein is NADH-quinone oxidoreductase subunit D of Methylobacillus flagellatus (strain ATCC 51484 / DSM 6875 / VKM B-1610 / KT).